Consider the following 118-residue polypeptide: Large ribosomal subunit protein bL17 (118 aa).

This sequence belongs to the bacterial ribosomal protein bL17 family. As to quaternary structure, part of the 50S ribosomal subunit. Contacts protein L32.

In Gemmatimonas aurantiaca (strain DSM 14586 / JCM 11422 / NBRC 100505 / T-27), this protein is Large ribosomal subunit protein bL17.